Here is a 319-residue protein sequence, read N- to C-terminus: Lambda-crystallin homolog (319 aa).

Ala-2 carries the post-translational modification N-acetylalanine. Position 3 is a phosphoserine (Ser-3). NAD(+)-binding positions include 16 to 17, Asp-36, Glu-97, and Lys-102; that span reads LI.

This sequence belongs to the 3-hydroxyacyl-CoA dehydrogenase family. In terms of assembly, homodimer. As to expression, widely expressed, with highest levels in liver. Undetectable in skeletal muscle.

The protein resides in the cytoplasm. The enzyme catalyses L-gulonate + NAD(+) = 3-dehydro-L-gulonate + NADH + H(+). With respect to regulation, inhibited by malonate. Has high L-gulonate 3-dehydrogenase activity. It also exhibits low dehydrogenase activity toward L-3-hydroxybutyrate (HBA) and L-threonate. This Mus musculus (Mouse) protein is Lambda-crystallin homolog (Cryl1).